The following is a 946-amino-acid chain: Protein dct-6 (946 aa).

Positions 326-363 (YMDMNDQIEQMIALLVDQLEELEKLEQLCDEVQKTGNQ) form a coiled coil.

In terms of biological role, may have a role in tumor suppression. This Caenorhabditis briggsae protein is Protein dct-6.